Here is a 717-residue protein sequence, read N- to C-terminus: Choline transporter-like protein 5 (717 aa).

The segment at Met-1–Asp-24 is disordered. Residues Met-1–Asp-38 are Cytoplasmic-facing. A helical transmembrane segment spans residues Val-39–Ala-59. Topologically, residues Trp-60 to Trp-242 are extracellular. Residues Asn-88 and Asn-190 are each glycosylated (N-linked (GlcNAc...) asparagine). The chain crosses the membrane as a helical span at residues Tyr-243 to Leu-263. At Arg-264 to Phe-265 the chain is on the cytoplasmic side. The helical transmembrane segment at Ile-266–Ile-286 threads the bilayer. The Extracellular segment spans residues Trp-287–Trp-325. A glycan (N-linked (GlcNAc...) asparagine) is linked at Asn-314. Residues Phe-326–Leu-346 form a helical membrane-spanning segment. Residues Arg-347–Arg-351 lie on the Cytoplasmic side of the membrane. A helical transmembrane segment spans residues Val-352–Val-372. Over Tyr-373 to Pro-374 the chain is Extracellular. A helical membrane pass occupies residues Ala-375–Leu-395. Topologically, residues Ala-396–Asn-460 are cytoplasmic. The chain crosses the membrane as a helical span at residues Leu-461 to Gly-481. Residues Ala-482–Ser-515 lie on the Extracellular side of the membrane. Residues Leu-516–Leu-536 traverse the membrane as a helical segment. At Asn-537–Tyr-610 the chain is on the cytoplasmic side. Residues Phe-611–Phe-631 traverse the membrane as a helical segment. Residues Phe-632 to Tyr-649 are Extracellular-facing. A helical membrane pass occupies residues Trp-650–Val-670. Over Tyr-671–Gln-717 the chain is Cytoplasmic.

This sequence belongs to the CTL (choline transporter-like) family.

The protein localises to the cell membrane. The catalysed reaction is choline(out) + n H(+)(in) = choline(in) + n H(+)(out). Its function is as follows. Choline/H+ antiporter. The chain is Choline transporter-like protein 5 (SLC44A5) from Macaca fascicularis (Crab-eating macaque).